We begin with the raw amino-acid sequence, 934 residues long: Leucine--tRNA ligase 1 (934 aa).

A 'HIGH' region motif is present at residues 41–51 (PYTNSPMHVGH). The 'KMSKS' region motif lies at 616-620 (KMSKS). Lys-619 is an ATP binding site.

Belongs to the class-I aminoacyl-tRNA synthetase family.

The protein resides in the cytoplasm. The catalysed reaction is tRNA(Leu) + L-leucine + ATP = L-leucyl-tRNA(Leu) + AMP + diphosphate. This is Leucine--tRNA ligase 1 from Saccharolobus solfataricus (strain ATCC 35092 / DSM 1617 / JCM 11322 / P2) (Sulfolobus solfataricus).